Reading from the N-terminus, the 2890-residue chain is Bifunctional DNA-directed RNA polymerase subunit beta-beta' (2890 aa).

The tract at residues 1 to 1377 (MSKKIPLKNR…DINIFGDDVD (1377 aa)) is DNA-directed RNA polymerase subunit beta. The segment at 1384–2890 (PIMIKEDDRP…LRALEDNSKF (1507 aa)) is DNA-directed RNA polymerase subunit beta'. Zn(2+) contacts are provided by Cys-1449, Cys-1451, Cys-1465, and Cys-1468. The Mg(2+) site is built by Asp-1849, Asp-1851, and Asp-1853. Cys-2179, Cys-2253, Cys-2260, and Cys-2263 together coordinate Zn(2+).

It in the N-terminal section; belongs to the RNA polymerase beta chain family. This sequence in the C-terminal section; belongs to the RNA polymerase beta' chain family. As to quaternary structure, the RNAP catalytic core consists of 2 alpha, 1 beta/beta' and 1 omega subunit. When a sigma factor is associated with the core the holoenzyme is formed, which can initiate transcription. It depends on Mg(2+) as a cofactor. Zn(2+) serves as cofactor.

The enzyme catalyses RNA(n) + a ribonucleoside 5'-triphosphate = RNA(n+1) + diphosphate. DNA-dependent RNA polymerase catalyzes the transcription of DNA into RNA using the four ribonucleoside triphosphates as substrates. The chain is Bifunctional DNA-directed RNA polymerase subunit beta-beta' (rpoBC) from Helicobacter pylori (strain J99 / ATCC 700824) (Campylobacter pylori J99).